The primary structure comprises 780 residues: ATP-dependent 6-phosphofructokinase, muscle type (780 aa).

Position 2 is an N-acetylthreonine (threonine 2). Positions 2–390 are N-terminal catalytic PFK domain 1; the sequence is THEEHHAAKT…NWEVYKLLAH (389 aa). Residues glycine 25, 88-89, and 118-121 each bind ATP; these read RC and GDGS. Position 119 (aspartate 119) interacts with Mg(2+). Serine 133 is modified (phosphoserine). Substrate is bound by residues 164–166, arginine 201, 208–210, glutamate 264, arginine 292, and 298–301; these read SID, MGR, and HVQR. The active-site Proton acceptor is aspartate 166. Serine 377 is modified (phosphoserine). The tract at residues 391 to 401 is interdomain linker; sequence IRPPVSKSGSH. A C-terminal regulatory PFK domain 2 region spans residues 402–780; the sequence is TVAVMNVGAP…SRKRSGEAPA (379 aa). Beta-D-fructose 2,6-bisphosphate is bound by residues arginine 471 and 528-532; that span reads TVSNN. O-linked (GlcNAc) serine glycosylation occurs at serine 530. An N6-(2-hydroxyisobutyryl)lysine modification is found at lysine 557. Residues arginine 566, 573 to 575, glutamate 629, arginine 655, and 661 to 664 each bind beta-D-fructose 2,6-bisphosphate; these read MGG and HMQQ. Serine 667 carries the phosphoserine modification. Arginine 735 contributes to the beta-D-fructose 2,6-bisphosphate binding site. Serine 775 is subject to Phosphoserine.

Belongs to the phosphofructokinase type A (PFKA) family. ATP-dependent PFK group I subfamily. Eukaryotic two domain clade 'E' sub-subfamily. Homo- and heterotetramers. Phosphofructokinase (PFK) enzyme functions as a tetramer composed of different combinations of 3 types of subunits, called PFKM (M), PFKL (L) and PFKP (P). The composition of the PFK tetramer differs according to the tissue type it is present in. The kinetic and regulatory properties of the tetrameric enzyme are dependent on the subunit composition, hence can vary across tissues. Interacts (via C-terminus) with HK1 (via N-terminal spermatogenic cell-specific region). The cofactor is Mg(2+). In terms of processing, glcNAcylation decreases enzyme activity.

The protein resides in the cytoplasm. It catalyses the reaction beta-D-fructose 6-phosphate + ATP = beta-D-fructose 1,6-bisphosphate + ADP + H(+). The protein operates within carbohydrate degradation; glycolysis; D-glyceraldehyde 3-phosphate and glycerone phosphate from D-glucose: step 3/4. Its activity is regulated as follows. Allosterically activated by ADP, AMP, or fructose 2,6-bisphosphate, and allosterically inhibited by ATP or citrate. Functionally, catalyzes the phosphorylation of D-fructose 6-phosphate to fructose 1,6-bisphosphate by ATP, the first committing step of glycolysis. This is ATP-dependent 6-phosphofructokinase, muscle type (PFKM) from Equus caballus (Horse).